The chain runs to 503 residues: Cytochrome P450 714C1 (503 aa).

Residues 1-6 lie on the Lumenal side of the membrane; that stretch reads MEKLLA. The helical; Signal-anchor for type III membrane protein transmembrane segment at 7–27 threads the bilayer; sequence LIVVLVILLSLALFYLCNILW. Over 28-503 the chain is Cytoplasmic; sequence LRAVKIRKKL…GLPLMVTKLP (476 aa). C450 contributes to the heme binding site.

It belongs to the cytochrome P450 family. Heme is required as a cofactor.

The protein localises to the membrane. In terms of biological role, probably not involved in gibberellin metabolism since over-expression of CYP714C1 in a heterologous system does not induce semi-dwarfism. The polypeptide is Cytochrome P450 714C1 (CYP714C1) (Oryza sativa subsp. japonica (Rice)).